Reading from the N-terminus, the 247-residue chain is PF03932 family protein CutC (247 aa).

Belongs to the CutC family.

Its subcellular location is the cytoplasm. This is PF03932 family protein CutC from Klebsiella pneumoniae subsp. pneumoniae (strain ATCC 700721 / MGH 78578).